Here is a 569-residue protein sequence, read N- to C-terminus: Formate--tetrahydrofolate ligase (569 aa).

64–71 serves as a coordination point for ATP; that stretch reads TPHGEGKT.

It belongs to the formate--tetrahydrofolate ligase family.

It carries out the reaction (6S)-5,6,7,8-tetrahydrofolate + formate + ATP = (6R)-10-formyltetrahydrofolate + ADP + phosphate. Its pathway is one-carbon metabolism; tetrahydrofolate interconversion. This chain is Formate--tetrahydrofolate ligase, found in Shewanella sp. (strain MR-7).